A 354-amino-acid polypeptide reads, in one-letter code: Methylthioribose-1-phosphate isomerase (354 aa).

Residues 48–50 (RGA), arginine 95, and glutamine 202 each bind substrate. Catalysis depends on aspartate 243, which acts as the Proton donor. A substrate-binding site is contributed by 253–254 (NK).

This sequence belongs to the eIF-2B alpha/beta/delta subunits family. MtnA subfamily.

The catalysed reaction is 5-(methylsulfanyl)-alpha-D-ribose 1-phosphate = 5-(methylsulfanyl)-D-ribulose 1-phosphate. It participates in amino-acid biosynthesis; L-methionine biosynthesis via salvage pathway; L-methionine from S-methyl-5-thio-alpha-D-ribose 1-phosphate: step 1/6. Its function is as follows. Catalyzes the interconversion of methylthioribose-1-phosphate (MTR-1-P) into methylthioribulose-1-phosphate (MTRu-1-P). This chain is Methylthioribose-1-phosphate isomerase, found in Roseiflexus castenholzii (strain DSM 13941 / HLO8).